A 180-amino-acid polypeptide reads, in one-letter code: MAEERAPRGRDRDRNREEKVDDGMIEKLVAVNRVSKTVKGGRQFTFTALTVVGDGLGKVGFGYGKAREVPVAIQKSMEQARKNLATVDLNNGTLWHAVKSGHGAARVYMQPASEGTGVIAGGAMRAVLEAVGVKNVLAKAVGSRNPINLVRATLKGLSEVQSPARVAAKRGKKVEELNHG.

The S5 DRBM domain maps to 24–87 (MIEKLVAVNR…EQARKNLATV (64 aa)).

Belongs to the universal ribosomal protein uS5 family. As to quaternary structure, part of the 30S ribosomal subunit. Contacts proteins S4 and S8.

In terms of biological role, with S4 and S12 plays an important role in translational accuracy. Its function is as follows. Located at the back of the 30S subunit body where it stabilizes the conformation of the head with respect to the body. This is Small ribosomal subunit protein uS5 from Xanthomonas axonopodis pv. citri (strain 306).